We begin with the raw amino-acid sequence, 2205 residues long: Kinesin-related protein 1 (2205 aa).

A Kinesin motor domain is found at 2-355 (NVQVAVRVRP…LRYADSAKKI (354 aa)). 102-109 (GQTGSGKS) serves as a coordination point for ATP. Residues 362–448 (NEDAQSKLIR…EDRMAALKDM (87 aa)) are a coiled coil. Residues 483–595 (TRIGRSDSEI…LTTGNRVILG (113 aa)) form the FHA domain. Residues 525-548 (FMNNNNNKENSSSTTPTSSKSPSK) show a composition bias toward low complexity. Disordered stretches follow at residues 525-568 (FMNN…EKKL), 971-993 (SKQQ…SSKN), 1084-1226 (DNPL…TNSA), and 1455-1508 (THQQ…STIV). Positions 549–568 (PKSEKEKENNNDDDDGEKKL) are enriched in basic and acidic residues. Low complexity-rich tracts occupy residues 978–991 (TSSS…SSSS), 1089–1103 (SSSA…PNNS), and 1117–1142 (TPYS…QGTP). Residues 1143–1164 (YNPQSNNPNVISNAPPTPNSNL) are compositionally biased toward polar residues. Composition is skewed to low complexity over residues 1169–1226 (SLAA…TNSA) and 1455–1492 (THQQ…TSSS). Residues 1523–1616 (EDETSGYLKK…WVQTLDPLRK (94 aa)) form the PH domain. Coiled coils occupy residues 1879-1918 (KDES…ETSA), 1946-2034 (SAQV…NGMA), and 2075-2149 (AHQS…KKKY).

The protein belongs to the TRAFAC class myosin-kinesin ATPase superfamily. Kinesin family. Unc-104 subfamily. As to quaternary structure, homodimer.

The protein resides in the cytoplasm. The protein localises to the cytoskeleton. It localises to the cytoplasmic vesicle membrane. In terms of biological role, microtubule-associated force-producing protein that plays a role in organelle transport. Its motor activity is directed toward the microtubule's plus end. Transports cytoplasmic vesicles and particularly phosphatidylinositol 4,5-bisphosphate-containing liposomes along microtubules. This chain is Kinesin-related protein 1 (kif1), found in Dictyostelium discoideum (Social amoeba).